Here is a 478-residue protein sequence, read N- to C-terminus: Septin-4 (478 aa).

2 disordered regions span residues 40–74 (DFSGNESCHPPEAKTWASRPQVLEPRPQAPDLYDD) and 87–115 (ADNQQYFCAPAPLSPSARPRSPWGKLDPY). A compositionally biased stretch (low complexity) spans 95–108 (APAPLSPSARPRSP). Residues Ser117 and Ser118 each carry the phosphoserine modification. In terms of domain architecture, Septin-type G spans 141–414 (KGFDFTLMVA…ENYRAQCIQS (274 aa)). The segment at 151 to 158 (GESGLGKS) is G1 motif. GTP is bound by residues 151–158 (GESGLGKS) and Thr185. A G3 motif region spans residues 208 to 211 (DTPG). The interval 289 to 292 (AKAD) is G4 motif. 290-298 (KADTLTPPE) is a binding site for GTP. Ser325 is subject to Phosphoserine. 2 residues coordinate GTP: Gly348 and Arg363. The interval 428–448 (LTRESGTDFPIPAVPPGTDPE) is disordered. Phosphoserine is present on Ser432. Thr434 carries the phosphothreonine modification. Residues 446–478 (DPETEKLIREKDEELRRMQEILHKIQKQMKETY) are a coiled coil.

It belongs to the TRAFAC class TrmE-Era-EngA-EngB-Septin-like GTPase superfamily. Septin GTPase family. In terms of assembly, septins polymerize into heterooligomeric protein complexes that form filaments, and can associate with cellular membranes, actin filaments and microtubules. GTPase activity is required for filament formation. Interacts with SEPTIN8. Component of a septin core octameric complex consisting of SEPTIN12, SEPTIN7, SEPTIN6 and SEPTIN2 or SEPTIN4 in the order 12-7-6-2-2-6-7-12 or 12-7-6-4-4-6-7-12. Interacts with SEPTIN14 (via C-terminus). Interacts with DYRK1A. Interacts with SLC6A3/DAT and SNCA/alpha-synuclein. Interacts with STX1A; in the striatum. Interacts with XIAP (via BIR3 domain) following the induction of apoptosis. Interacts with AREL1 (via HECT domain); in the cytoplasm following induction of apoptosis. Ubiquitinated by AREL1. In terms of processing, phosphorylated by DYRK1A.

The protein resides in the cytoplasm. Its subcellular location is the cell projection. It localises to the cilium. It is found in the flagellum. The protein localises to the cytoplasmic vesicle. The protein resides in the secretory vesicle. Its subcellular location is the axon. It localises to the dendrite. It is found in the perikaryon. The protein localises to the synapse. Functionally, filament-forming cytoskeletal GTPase. Pro-apoptotic protein involved in LGR5-positive intestinal stem cell and Paneth cell expansion in the intestines, via its interaction with XIAP. May also play a role in the regulation of cell fate in the intestine. Positive regulator of apoptosis involved in hematopoietic stem cell homeostasis; via its interaction with XIAP. Negative regulator of repair and hair follicle regeneration in response to injury, due to inhibition of hair follicle stem cell proliferation, potentially via its interaction with XIAP. Plays an important role in male fertility and sperm motility. During spermiogenesis, essential for the establishment of the annulus (a fibrous ring structure connecting the midpiece and the principal piece of the sperm flagellum) which is a requisite for the structural and mechanical integrity of the sperm. Involved in the migration of cortical neurons and the formation of neuron leading processes during embryonic development. Required for dopaminergic metabolism in presynaptic autoreceptors; potentially via activity as a presynaptic scaffold protein. The protein is Septin-4 of Macaca fascicularis (Crab-eating macaque).